The primary structure comprises 199 residues: dITP/XTP pyrophosphatase (199 aa).

7–12 is a substrate binding site; that stretch reads SNNRGK. D68 serves as the catalytic Proton acceptor. Residue D68 participates in Mg(2+) binding. Residues A69, 154-157, K177, and 182-183 contribute to the substrate site; these read FGFD and HR.

It belongs to the HAM1 NTPase family. In terms of assembly, homodimer. It depends on Mg(2+) as a cofactor.

It carries out the reaction XTP + H2O = XMP + diphosphate + H(+). It catalyses the reaction dITP + H2O = dIMP + diphosphate + H(+). The catalysed reaction is ITP + H2O = IMP + diphosphate + H(+). Pyrophosphatase that catalyzes the hydrolysis of nucleoside triphosphates to their monophosphate derivatives, with a high preference for the non-canonical purine nucleotides XTP (xanthosine triphosphate), dITP (deoxyinosine triphosphate) and ITP. Seems to function as a house-cleaning enzyme that removes non-canonical purine nucleotides from the nucleotide pool, thus preventing their incorporation into DNA/RNA and avoiding chromosomal lesions. In Albidiferax ferrireducens (strain ATCC BAA-621 / DSM 15236 / T118) (Rhodoferax ferrireducens), this protein is dITP/XTP pyrophosphatase.